The sequence spans 411 residues: Arginine deiminase (411 aa).

Cysteine 401 functions as the Amidino-cysteine intermediate in the catalytic mechanism.

It belongs to the arginine deiminase family.

It is found in the cytoplasm. It carries out the reaction L-arginine + H2O = L-citrulline + NH4(+). The protein operates within amino-acid degradation; L-arginine degradation via ADI pathway; carbamoyl phosphate from L-arginine: step 1/2. This Staphylococcus aureus (strain MRSA252) protein is Arginine deiminase.